We begin with the raw amino-acid sequence, 456 residues long: Phosphomethylpyrimidine synthase (456 aa).

Residues Asn-80, Met-109, Tyr-139, His-175, 195–197 (SRG), 236–239 (DSLR), and Glu-275 contribute to the substrate site. His-279 serves as a coordination point for Zn(2+). Residue Tyr-302 coordinates substrate. His-343 provides a ligand contact to Zn(2+). [4Fe-4S] cluster contacts are provided by Cys-423, Cys-426, and Cys-431.

Belongs to the ThiC family. [4Fe-4S] cluster serves as cofactor.

It carries out the reaction 5-amino-1-(5-phospho-beta-D-ribosyl)imidazole + S-adenosyl-L-methionine = 4-amino-2-methyl-5-(phosphooxymethyl)pyrimidine + CO + 5'-deoxyadenosine + formate + L-methionine + 3 H(+). It participates in cofactor biosynthesis; thiamine diphosphate biosynthesis. In terms of biological role, catalyzes the synthesis of the hydroxymethylpyrimidine phosphate (HMP-P) moiety of thiamine from aminoimidazole ribotide (AIR) in a radical S-adenosyl-L-methionine (SAM)-dependent reaction. The protein is Phosphomethylpyrimidine synthase of Prochlorococcus marinus (strain MIT 9515).